A 381-amino-acid chain; its full sequence is Alkanesulfonate monooxygenase (381 aa).

The protein belongs to the SsuD family. As to quaternary structure, homotetramer.

It catalyses the reaction an alkanesulfonate + FMNH2 + O2 = an aldehyde + FMN + sulfite + H2O + 2 H(+). Its function is as follows. Catalyzes the desulfonation of aliphatic sulfonates. The protein is Alkanesulfonate monooxygenase of Escherichia coli (strain SE11).